The chain runs to 420 residues: UDP-glucuronic acid decarboxylase 1 (420 aa).

Met1 is modified (N-acetylmethionine). Residues 1–19 (MVSKGLLRLVSSVNRRRMK) are Cytoplasmic-facing. A helical; Signal-anchor for type II membrane protein transmembrane segment spans residues 20-40 (LLLGIALFAYAASVWGNFVNM). The Lumenal portion of the chain corresponds to 41 to 420 (RSIQENGELK…RVKKGRTRHS (380 aa)). Residue Thr94 is modified to Phosphothreonine. Residues Gly98, Phe99, Val100, Asp119, Asn120, Phe122, Thr123, Gly124, Asp144, and Val145 each coordinate NAD(+). 2 residues coordinate UDP-alpha-D-glucuronate: Leu149 and Tyr150. Leu159 and Ser161 together coordinate NAD(+). A UDP-alpha-D-glucuronate-binding site is contributed by Lys177. Residue Thr178 coordinates NAD(+). Positions 185, 188, 191, and 192 each coordinate UDP-alpha-D-glucuronate. Residues Ala200, Tyr231, and Lys235 each contribute to the NAD(+) site. Tyr231 acts as the Proton acceptor in catalysis. UDP-alpha-D-glucuronate is bound by residues Tyr245, Gln248, and Glu249. NAD(+) contacts are provided by Thr261, His267, and Arg272. N-linked (GlcNAc...) asparagine glycosylation is present at Asn316.

This sequence belongs to the NAD(P)-dependent epimerase/dehydratase family. UDP-glucuronic acid decarboxylase subfamily. In terms of assembly, homodimer and homotetramer. Interacts with AKT1. NAD(+) is required as a cofactor.

The protein resides in the golgi apparatus. It localises to the golgi stack membrane. The enzyme catalyses UDP-alpha-D-glucuronate + H(+) = UDP-alpha-D-xylose + CO2. It functions in the pathway nucleotide-sugar biosynthesis; UDP-alpha-D-xylose biosynthesis; UDP-alpha-D-xylose from UDP-alpha-D-glucuronate: step 1/1. In terms of biological role, catalyzes the NAD-dependent decarboxylation of UDP-glucuronic acid to UDP-xylose. Necessary for the biosynthesis of the core tetrasaccharide in glycosaminoglycan biosynthesis. The protein is UDP-glucuronic acid decarboxylase 1 (Uxs1) of Mus musculus (Mouse).